The chain runs to 338 residues: UPF0252 protein PF1496 (338 aa).

Residues isoleucine 100 to serine 120 form a helical membrane-spanning segment.

Belongs to the UPF0252 family.

It localises to the membrane. The sequence is that of UPF0252 protein PF1496 from Pyrococcus furiosus (strain ATCC 43587 / DSM 3638 / JCM 8422 / Vc1).